Consider the following 442-residue polypeptide: Trigger factor (442 aa).

Residues 176 to 259 (GDFISLSLYV…VNAVIEISSP (84 aa)) enclose the PPIase FKBP-type domain.

It belongs to the FKBP-type PPIase family. Tig subfamily.

It is found in the cytoplasm. It carries out the reaction [protein]-peptidylproline (omega=180) = [protein]-peptidylproline (omega=0). In terms of biological role, involved in protein export. Acts as a chaperone by maintaining the newly synthesized protein in an open conformation. Functions as a peptidyl-prolyl cis-trans isomerase. This Chlamydia trachomatis serovar A (strain ATCC VR-571B / DSM 19440 / HAR-13) protein is Trigger factor.